Consider the following 570-residue polypeptide: Protein NRT1/ PTR FAMILY 8.1 (570 aa).

Threonine 98 is subject to Phosphothreonine. The next 10 helical transmembrane spans lie at 99–119 (IATF…SASV), 140–160 (AVFF…KPCV), 182–202 (FFNW…TVLV), 210–230 (WGWG…FFFF), 329–349 (IITL…YSQM), 377–397 (LFDT…IIPL), 414–434 (MGIG…LEVV), 454–474 (IFWQ…TFIG), 494–514 (LSLT…TVVM), and 537–557 (YFFY…LWIS).

This sequence belongs to the major facilitator superfamily. Proton-dependent oligopeptide transporter (POT/PTR) (TC 2.A.17) family. In terms of tissue distribution, expressed in cotyledons, hypocotyls, leaves, roots, flowers, pistils and vascular tissue of sepals, anthers, carpels and funiculi. Not detected in seeds.

The protein resides in the cell membrane. Peptide transporter. Mediates the transport of di- and tripeptides. High affinity transporter with low selectivity. No transport of amino acids. The polypeptide is Protein NRT1/ PTR FAMILY 8.1 (NPF8.1) (Arabidopsis thaliana (Mouse-ear cress)).